The sequence spans 113 residues: Con-Ins G3 (113 aa).

Residues 1–21 (MTTSFYFLLVALGLLLYVCQS) form the signal peptide. A propeptide spanning residues 22-29 (SFGNQHTR) is cleaved from the precursor. Position 34 is a 4-hydroxyproline; partial (Pro-34). 3 disulfides stabilise this stretch: Cys-38-Cys-99, Cys-50-Cys-112, and Cys-98-Cys-103. At Glu-41 the chain carries 4-carboxyglutamate. His-51 carries the histidine amide modification. The propeptide at 52–92 (GKRNDAGKKRGRASPLWQRQGFLSMLKAKRNEAFFLQRDGR) is c peptide. The residue at position 96 (Glu-96) is a 4-carboxyglutamate. Pro-102 is modified (4-hydroxyproline; partial).

This sequence belongs to the insulin family. In terms of assembly, heterodimer of A and B chains; disulfide-linked. It is noteworthy that in this dimer, in contrast to Con-Ins G1, the chain B is amidated and not the chain A. As to expression, expressed by the venom gland.

It is found in the secreted. Its function is as follows. This venom insulin, from a fish-hunting cone snail, facilitates prey capture by rapidly inducing hypoglycemic shock. It is one of the smallest known insulin found in nature and lacks the C-terminal segment of the B chain that, in human insulin, mediates engagement of the insulin receptor (INSR) and assembly of the hormone's hexameric storage form. Despite lacking this segment, it both binds and activates human insulin receptor (long isoform (HIR-B)) with a high potency (EC(50)=242 nM). In vivo, intraperitoneal injection of this peptide into zebrafish lowers blood glucose with a lower potency than human insulin. In addition, when applied to water, this peptide reduces overall locomotor activity of zebrafish larvae, observed as a significant decrease in the percentage of time spent swimming and movement frequency. When tested on a mouse model of diabetes, this insulin also lowers blood glucose with a 10-fold lower potency than human insulin. The polypeptide is Con-Ins G3 (Conus geographus (Geography cone)).